The sequence spans 129 residues: Profilin-4 (129 aa).

Belongs to the profilin family. Expressed in testis, in seminiferous tubules (at protein level). Expressed in spermatocytes and spermatids, but not in spermatogonium.

Its subcellular location is the cytoplasm. Functionally, involved in male fertility. Required for manchette development and acrosome biogenesis during spermiogenesis. Binds in vitro to phospholipids, including phosphatidylinositol 3-phosphate (PtdIns(3)P), phosphatidylinositol 4,5-bisphosphate (PtdIns(4,5)P2), phosphatidylinositol 4-phosphate (PtdIns(4)P) and phosphatidic acid (PA). Contrary to other profilin family members, does not bind to actin in vitro. In Rattus norvegicus (Rat), this protein is Profilin-4 (Pfn4).